The following is an 822-amino-acid chain: Endonuclease MutS2 (822 aa).

348–355 contributes to the ATP binding site; it reads GPNTGGKT. The tract at residues 707–737 is disordered; that stretch reads SLNGKKVEPPPKSEPVPKKVKAEPPATEAKS. Positions 709 to 728 are enriched in basic and acidic residues; it reads NGKKVEPPPKSEPVPKKVKA. One can recognise a Smr domain in the interval 749 to 822; it reads LDCRGDRLER…GAGVTIAYLR (74 aa).

The protein belongs to the DNA mismatch repair MutS family. MutS2 subfamily. In terms of assembly, homodimer. Binds to stalled ribosomes, contacting rRNA.

Functionally, endonuclease that is involved in the suppression of homologous recombination and thus may have a key role in the control of bacterial genetic diversity. Acts as a ribosome collision sensor, splitting the ribosome into its 2 subunits. Detects stalled/collided 70S ribosomes which it binds and splits by an ATP-hydrolysis driven conformational change. Acts upstream of the ribosome quality control system (RQC), a ribosome-associated complex that mediates the extraction of incompletely synthesized nascent chains from stalled ribosomes and their subsequent degradation. Probably generates substrates for RQC. In Synechocystis sp. (strain ATCC 27184 / PCC 6803 / Kazusa), this protein is Endonuclease MutS2.